A 214-amino-acid chain; its full sequence is Pyrrolidone-carboxylate peptidase 2 (214 aa).

Catalysis depends on residues glutamate 78, cysteine 141, and histidine 165.

This sequence belongs to the peptidase C15 family. In terms of assembly, homotetramer.

It localises to the cytoplasm. It catalyses the reaction Release of an N-terminal pyroglutamyl group from a polypeptide, the second amino acid generally not being Pro.. Its function is as follows. Removes 5-oxoproline from various penultimate amino acid residues except L-proline. This Streptococcus pneumoniae serotype 4 (strain ATCC BAA-334 / TIGR4) protein is Pyrrolidone-carboxylate peptidase 2.